The sequence spans 75 residues: Translational regulator CsrA (75 aa).

Belongs to the CsrA/RsmA family. Homodimer; the beta-strands of each monomer intercalate to form a hydrophobic core, while the alpha-helices form wings that extend away from the core.

It is found in the cytoplasm. Functionally, a translational regulator that binds mRNA to regulate translation initiation and/or mRNA stability. Usually binds in the 5'-UTR at or near the Shine-Dalgarno sequence preventing ribosome-binding, thus repressing translation. Its main target seems to be the major flagellin gene, while its function is anatagonized by FliW. The protein is Translational regulator CsrA of Exiguobacterium sp. (strain ATCC BAA-1283 / AT1b).